The primary structure comprises 89 residues: MKRVLVKGIQGYQRFISPLKPPTCRFYPSCSHYGIEAIEKHGAVKGSYLTARRLIRCQPFHPGGLDYVPDTFDWKAPLQREKPESQRDD.

The protein belongs to the UPF0161 family.

It is found in the cell membrane. In terms of biological role, could be involved in insertion of integral membrane proteins into the membrane. This is Putative membrane protein insertion efficiency factor from Exiguobacterium sp. (strain ATCC BAA-1283 / AT1b).